The sequence spans 78 residues: Large ribosomal subunit protein bL28 (78 aa).

Residues 1–25 form a disordered region; sequence MSRVCQVTGKRPTVGNNRSHAKNAT.

This sequence belongs to the bacterial ribosomal protein bL28 family.

The polypeptide is Large ribosomal subunit protein bL28 (Tolumonas auensis (strain DSM 9187 / NBRC 110442 / TA 4)).